Reading from the N-terminus, the 259-residue chain is Glutamate racemase (259 aa).

Residues 12 to 13 and 44 to 45 each bind substrate; these read DS and YG. Residue Cys75 is the Proton donor/acceptor of the active site. Residue 76–77 coordinates substrate; that stretch reads NT. The active-site Proton donor/acceptor is Cys186. 187–188 is a substrate binding site; it reads TH.

It belongs to the aspartate/glutamate racemases family.

The enzyme catalyses L-glutamate = D-glutamate. It functions in the pathway cell wall biogenesis; peptidoglycan biosynthesis. Provides the (R)-glutamate required for cell wall biosynthesis. The polypeptide is Glutamate racemase (Clostridium novyi (strain NT)).